Reading from the N-terminus, the 591-residue chain is V-type ATP synthase alpha chain (591 aa).

Residue 232-239 (GPFGAGKT) coordinates ATP.

The protein belongs to the ATPase alpha/beta chains family.

It carries out the reaction ATP + H2O + 4 H(+)(in) = ADP + phosphate + 5 H(+)(out). In terms of biological role, produces ATP from ADP in the presence of a proton gradient across the membrane. The V-type alpha chain is a catalytic subunit. The chain is V-type ATP synthase alpha chain from Clostridium perfringens (strain ATCC 13124 / DSM 756 / JCM 1290 / NCIMB 6125 / NCTC 8237 / Type A).